The sequence spans 492 residues: Ketol-acid reductoisomerase (NADP(+)) (492 aa).

The 192-residue stretch at 17-208 folds into the KARI N-terminal Rossmann domain; that stretch reads LGVCEFMDRS…GGDRAGVLKS (192 aa). NADP(+) contacts are provided by residues 45-48, R68, R76, S78, and 108-110; these read CGAQ and DKQ. H132 is an active-site residue. Position 158 (G158) interacts with NADP(+). KARI C-terminal knotted domains are found at residues 209–353 and 354–487; these read SFVA…AEQE and YYDN…MTEM. Positions 217, 221, 389, and 393 each coordinate Mg(2+). Position 414 (S414) interacts with substrate.

Belongs to the ketol-acid reductoisomerase family. Mg(2+) is required as a cofactor.

The catalysed reaction is (2R)-2,3-dihydroxy-3-methylbutanoate + NADP(+) = (2S)-2-acetolactate + NADPH + H(+). It catalyses the reaction (2R,3R)-2,3-dihydroxy-3-methylpentanoate + NADP(+) = (S)-2-ethyl-2-hydroxy-3-oxobutanoate + NADPH + H(+). The protein operates within amino-acid biosynthesis; L-isoleucine biosynthesis; L-isoleucine from 2-oxobutanoate: step 2/4. It functions in the pathway amino-acid biosynthesis; L-valine biosynthesis; L-valine from pyruvate: step 2/4. Its function is as follows. Involved in the biosynthesis of branched-chain amino acids (BCAA). Catalyzes an alkyl-migration followed by a ketol-acid reduction of (S)-2-acetolactate (S2AL) to yield (R)-2,3-dihydroxy-isovalerate. In the isomerase reaction, S2AL is rearranged via a Mg-dependent methyl migration to produce 3-hydroxy-3-methyl-2-ketobutyrate (HMKB). In the reductase reaction, this 2-ketoacid undergoes a metal-dependent reduction by NADPH to yield (R)-2,3-dihydroxy-isovalerate. This is Ketol-acid reductoisomerase (NADP(+)) from Cytophaga hutchinsonii (strain ATCC 33406 / DSM 1761 / CIP 103989 / NBRC 15051 / NCIMB 9469 / D465).